A 675-amino-acid chain; its full sequence is Vitamin K-dependent protein S (675 aa).

Residues 1–24 (MRVLSARFRVLLACLALVIPVSET) form the signal peptide. A propeptide spanning residues 25–41 (NFLSKERASQVLVRKRR) is cleaved from the precursor. A Gla domain is found at 42–87 (ANTLFEETMKGNLERECIEELCNKEEAREVFENNPETDYFYPKYLG). 4-carboxyglutamate is present on residues E47, E48, E55, E57, E60, E61, E66, E67, E70, E73, and E77. A disulfide bridge links C58 with C63. The tract at residues 88–116 (CLGAFRVGSFHAARQSANAYPDLRSCVKA) is thrombin-sensitive. An EGF-like 1 domain is found at 117-155 (ISDQCDPIPCNEDGYLACQDGQAAFTCFCKPGWQGDRCQ). Disulfide bonds link C121/C134, C126/C143, C145/C154, C161/C175, C171/C184, C186/C199, C205/C217, C212/C226, C228/C241, C247/C256, C252/C265, C267/C282, and C449/C475. (3R)-3-hydroxyaspartate is present on D136. An EGF-like 2; calcium-binding domain is found at 157 to 200 (DVNECKDPSNVNGGCSQICDNTPGSYHCSCKRGFAMLPNKKDCK). One can recognise an EGF-like 3; calcium-binding domain in the interval 201–242 (DLDECALKPSVCGTAVCKNIPGDFECECPDGYRYDPSSKSCK). In terms of domain architecture, EGF-like 4; calcium-binding spans 243–283 (DVDECSENMCAQLCVNFPGGYSCYCDGKKGFKLAQDQKSCE). 2 Laminin G-like domains span residues 299 to 475 (LLYL…NKHC) and 484 to 665 (YYPG…AHSC). 2 N-linked (GlcNAc...) asparagine glycosylation sites follow: N499 and N509. A disulfide bridge links C638 with C665.

In terms of processing, the iron and 2-oxoglutarate dependent 3-hydroxylation of aspartate and asparagine is (R) stereospecific within EGF domains. As to expression, plasma.

The protein localises to the secreted. Anticoagulant plasma protein; it is a cofactor to activated protein C in the degradation of coagulation factors Va and VIIIa. It helps to prevent coagulation and stimulating fibrinolysis. In Mus musculus (Mouse), this protein is Vitamin K-dependent protein S (Pros1).